A 258-amino-acid polypeptide reads, in one-letter code: MLAIISPAKTLDFESAVKNFPVFQPHFTDYSEQLIEVCRKLSPQDLSSLMSISDKLAGLNVARFAEWTKIHNEDNSRPALFAFKGDVYTGLDADSLSEDDVIFAQSHLRMLSGLYGLLKPLDLMQPYRLEMGTKLANPKGKDLYAFWGNVITQAVQQAIDAQGDNVLVNLASDEYYKSVKENQLNAKIIKPVFLDNKNGKYKVISFYAKKARGLMCRYLIQNRLTDIEQLKEFDLGGYWFDSASSTETEFVFKRDINE.

The protein belongs to the UPF0246 family.

This chain is UPF0246 protein NTHI1156, found in Haemophilus influenzae (strain 86-028NP).